Reading from the N-terminus, the 300-residue chain is Tyrosine recombinase XerD (300 aa).

Residues 6-89 (LFHKRLIEQF…ALKVFFHFLK (84 aa)) form the Core-binding (CB) domain. Residues 108–293 (RLPSILSTEE…ASESLIEKFH (186 aa)) form the Tyr recombinase domain. Residues Arg152, Lys174, His245, Arg248, and His271 contribute to the active site. The active-site O-(3'-phospho-DNA)-tyrosine intermediate is the Tyr280.

Belongs to the 'phage' integrase family. XerD subfamily. In terms of assembly, forms a cyclic heterotetrameric complex composed of two molecules of XerC and two molecules of XerD.

The protein localises to the cytoplasm. Site-specific tyrosine recombinase, which acts by catalyzing the cutting and rejoining of the recombining DNA molecules. The XerC-XerD complex is essential to convert dimers of the bacterial chromosome into monomers to permit their segregation at cell division. It also contributes to the segregational stability of plasmids. This chain is Tyrosine recombinase XerD, found in Chlamydia trachomatis serovar D (strain ATCC VR-885 / DSM 19411 / UW-3/Cx).